We begin with the raw amino-acid sequence, 689 residues long: Glycine--tRNA ligase beta subunit (689 aa).

It belongs to the class-II aminoacyl-tRNA synthetase family. As to quaternary structure, tetramer of two alpha and two beta subunits.

It localises to the cytoplasm. It carries out the reaction tRNA(Gly) + glycine + ATP = glycyl-tRNA(Gly) + AMP + diphosphate. The sequence is that of Glycine--tRNA ligase beta subunit (glyS) from Pasteurella multocida (strain Pm70).